A 337-amino-acid chain; its full sequence is Anthranilate phosphoribosyltransferase (337 aa).

5-phospho-alpha-D-ribose 1-diphosphate is bound by residues Gly80, 83 to 84 (GD), Thr88, 90 to 93 (NIST), 108 to 116 (KHGNRAVSS), and Ser120. Gly80 serves as a coordination point for anthranilate. Ser92 contacts Mg(2+). Asn111 serves as a coordination point for anthranilate. Arg166 is a binding site for anthranilate. Mg(2+) is bound by residues Asp224 and Glu225.

This sequence belongs to the anthranilate phosphoribosyltransferase family. As to quaternary structure, homodimer. The cofactor is Mg(2+).

The enzyme catalyses N-(5-phospho-beta-D-ribosyl)anthranilate + diphosphate = 5-phospho-alpha-D-ribose 1-diphosphate + anthranilate. The protein operates within amino-acid biosynthesis; L-tryptophan biosynthesis; L-tryptophan from chorismate: step 2/5. Functionally, catalyzes the transfer of the phosphoribosyl group of 5-phosphorylribose-1-pyrophosphate (PRPP) to anthranilate to yield N-(5'-phosphoribosyl)-anthranilate (PRA). This Anaeromyxobacter sp. (strain K) protein is Anthranilate phosphoribosyltransferase.